A 123-amino-acid chain; its full sequence is Defensin beta 118 (123 aa).

An N-terminal signal peptide occupies residues 1-19; it reads MKLLLLALPMLVLLPQVIP. Cystine bridges form between C27–C54, C34–C48, and C38–C55. 2 disordered regions span residues 59–79 and 102–123; these read NEDHRQVPTTSPTPLSDSTPG and MVEESEAGWGTQTSLPDVHHSS. A propeptide spanning residues 64-123 is cleaved from the precursor; sequence QVPTTSPTPLSDSTPGSIDDILTVRFTTDYFEVSSKKDMVEESEAGWGTQTSLPDVHHSS. A compositionally biased stretch (low complexity) spans 66 to 79; it reads PTTSPTPLSDSTPG.

This sequence belongs to the beta-defensin family. Post-translationally, the three-dimensional structure formed by the three intramolecular disulfide bridges is indispensable for antimicrobial activity.

The protein resides in the secreted. In terms of biological role, host defense peptide that exhibits antimicrobial activity against both Gram-negative bacteria, such as E.coli and S.typhimurium, and Gram-positive bacteria, such as S.aureus and B.subtilis. Inhibits cell adhesion of E.coli on intestinal epithelial enterocytes. Causes rapid permeabilization of both the outer and inner membrane of E.coli, leading to morphological alterations on the bacterial surface. Binds to bacterial lipopolysaccharides (LPS) with high affinity, and may thereby be involved in immunoregulation through LPS neutralization. May contribute to epididymal innate immunity and protect the sperm against attack by microorganisms. The protein is Defensin beta 118 (DEFB118) of Hylobates lar (Lar gibbon).